Reading from the N-terminus, the 90-residue chain is Small ribosomal subunit protein bS18 (90 aa).

It belongs to the bacterial ribosomal protein bS18 family. Part of the 30S ribosomal subunit. Forms a tight heterodimer with protein bS6.

Its function is as follows. Binds as a heterodimer with protein bS6 to the central domain of the 16S rRNA, where it helps stabilize the platform of the 30S subunit. The protein is Small ribosomal subunit protein bS18 of Bacteroides fragilis (strain YCH46).